The sequence spans 175 residues: uncharacterized protein (175 aa).

The transit peptide at 1–11 (METWRKGSFRN) directs the protein to the mitochondrion. The segment at 29–48 (QGSILSQASTAGGDHEEYSN) is disordered.

It localises to the mitochondrion. This is an uncharacterized protein from Mus musculus (Mouse).